The chain runs to 452 residues: 23S rRNA (uracil(1939)-C(5))-methyltransferase RlmD (452 aa).

Residues 1 to 25 (MSKKKSNSGLRFQPAGGNRTPQVPV) form a disordered region. The region spanning 22 to 80 (QVPVGKKQRLDIERLAGDGRGIAFLDGRTWFVSGALAGEAVEARVLNARGKVVEARLER) is the TRAM domain. Residues Cys-93, Cys-99, Cys-102, and Cys-181 each contribute to the [4Fe-4S] cluster site. S-adenosyl-L-methionine is bound by residues Gln-285, Phe-314, Asn-319, Glu-335, Asp-362, and Asp-383. Cys-409 serves as the catalytic Nucleophile.

It belongs to the class I-like SAM-binding methyltransferase superfamily. RNA M5U methyltransferase family. RlmD subfamily.

The catalysed reaction is uridine(1939) in 23S rRNA + S-adenosyl-L-methionine = 5-methyluridine(1939) in 23S rRNA + S-adenosyl-L-homocysteine + H(+). Its function is as follows. Catalyzes the formation of 5-methyl-uridine at position 1939 (m5U1939) in 23S rRNA. The polypeptide is 23S rRNA (uracil(1939)-C(5))-methyltransferase RlmD (Pseudomonas putida (strain ATCC 47054 / DSM 6125 / CFBP 8728 / NCIMB 11950 / KT2440)).